Here is a 542-residue protein sequence, read N- to C-terminus: Chaperonin GroEL 1 (542 aa).

ATP-binding positions include 29 to 32 (TIGP), 86 to 90 (DGTTT), Gly414, 479 to 481 (DAL), and Asp495.

The protein belongs to the chaperonin (HSP60) family. In terms of assembly, forms a cylinder of 14 subunits composed of two heptameric rings stacked back-to-back. Interacts with the co-chaperonin GroES.

It localises to the cytoplasm. It catalyses the reaction ATP + H2O + a folded polypeptide = ADP + phosphate + an unfolded polypeptide.. In terms of biological role, together with its co-chaperonin GroES, plays an essential role in assisting protein folding. The GroEL-GroES system forms a nano-cage that allows encapsulation of the non-native substrate proteins and provides a physical environment optimized to promote and accelerate protein folding. The chain is Chaperonin GroEL 1 from Synechococcus sp. (strain JA-3-3Ab) (Cyanobacteria bacterium Yellowstone A-Prime).